The sequence spans 326 residues: tRNA-modifying protein YgfZ (326 aa).

Residues tryptophan 27 and tryptophan 189 each coordinate folate.

Belongs to the tRNA-modifying YgfZ family.

It is found in the cytoplasm. Folate-binding protein involved in regulating the level of ATP-DnaA and in the modification of some tRNAs. It is probably a key factor in regulatory networks that act via tRNA modification, such as initiation of chromosomal replication. The protein is tRNA-modifying protein YgfZ of Escherichia coli O6:K15:H31 (strain 536 / UPEC).